A 131-amino-acid chain; its full sequence is MSWQTYVDDHLCCEIDGQHLTSAAILGHDGRVWVQSPNFPQFKPEEIAGIIKDFDEPGHLAPTGLFLGGTKYMVIQGEPGVVIRGKKGTGGITIKKTGMPLILGIYDEPMTPGQCNLVVERLGDYLVEQGF.

This sequence belongs to the profilin family. Occurs in many kinds of cells as a complex with monomeric actin in a 1:1 ratio.

Its subcellular location is the cytoplasm. The protein localises to the cytoskeleton. In terms of biological role, binds to actin and affects the structure of the cytoskeleton. At high concentrations, profilin prevents the polymerization of actin, whereas it enhances it at low concentrations. By binding to PIP2, it inhibits the formation of IP3 and DG. The chain is Profilin-1 (PRO1) from Hordeum vulgare (Barley).